The sequence spans 1342 residues: MVNSYTEKKRIRKDFGKRDQVLETPYLLSIQLDSFKQFLDADPEGAYGLEAAFRSVFPITSYSGTAELQYVSYRLGEPVFDVKECQIRGVTYSAPLRVKLRLVLFDKEAAAGTVKEIKEQEVYMGEIPLMTDNGTFVINGTERVIVSQLHRSPGVFFDHDKGKTHSSGKVLYNARVIPYRGSWLDFEFDAKDNLFVRIDRRRKLPATIILRALEFTTEEILTTFFETIKFEIKDGKVLMELVPERLRGETATFDIVAGGDVVVEKGRRITARHIRQLEKAGISQIEVPVEYVVGKISARDYVNPQTGEVMINANTALSLEAIANLSQAGFKQFEVLFTNELDHGSYISETLRIDSSTNRLEALVEIYRMMRPGEPPTKDAAEQLFENLFFSADRYDLSTVGRMKFNSRLARPDHIGSGILSQDDIVDVMKQLIAIRNGKDDVDDIDHLGNRRIRSVGEMAENQFRVGLVRVERAVKERLSLGDLDAIQPQDLINAKPISAAVKEFFGSSQLSQFMDQNNPLSEITHKRRISALGPGGLTRERAGFEVRDVHPTHYGRLCPIETPEGPNIGLINSLAVYSRTNEYGFLETPYRKVIDGVITDEVDYLSAIEEGNFVIAQANANVDADARLKDELIPCRHKGESTFMNAEQIQYMDVSPQQVVSVAASLIPFLEHDDANRALMGSNMQRQAVPTLRADKPLVGTGMERAVAVDSGVTVVAKRGGTIDYVDASRIVVKVNEDELLPGEAGIDIYNLTKYTRSNQNTCINQRPCVSVGEPVMLGDVLADGPSTDLGELALGQNMRVAFMPWNGYNFEDSILVSERVVQEDRLTTIHIQELSCIARDTKLGPEEITADIPNVGEAALSKLDESGIVYVGAEVKGGDILVGKVTPKGETQLTPEEKLLRAIFGEKASDVKDSSLRVPNGVYGTVIDVQVFTRDGVEKDKRAKEVEDMQLRDAKKDLTEEFKILEDGIFGRARSLLIANGFGEDRLSKLDRKRWLEQSLDDEGKQVELEQIAEQHIALKEEFDRKFEAKRQKIIQGDDLAPGVLKIVKVYLAVKRRIQPGDKMAGRHGNKGVISKICPVEDMPYDDEGNPVDIVLNPLGVPSRMNIGQILEVHLGLAAKGIGEKIDRMVKEQRELAELREFLQRVYDLGGSDQQQIDIATLSDDDVRTLVQNLRKGLPVATPVFDGAKESEIKELLKLADKPESGQITLFDGRTGMPFERVVTVGYMYMLKLNHLVDDKMHARSTGSYSLVTQQPLGGKAQFGGQRFGEMEVWALEAYGAAYTLQEMLTVKSDDVNGRTKMYKNIVDGDHRMEPGIPESFNVLLKEIRSLGINIELEEE.

It belongs to the RNA polymerase beta chain family. The RNAP catalytic core consists of 2 alpha, 1 beta, 1 beta' and 1 omega subunit. When a sigma factor is associated with the core the holoenzyme is formed, which can initiate transcription.

It catalyses the reaction RNA(n) + a ribonucleoside 5'-triphosphate = RNA(n+1) + diphosphate. Functionally, DNA-dependent RNA polymerase catalyzes the transcription of DNA into RNA using the four ribonucleoside triphosphates as substrates. The polypeptide is DNA-directed RNA polymerase subunit beta (Tolumonas auensis (strain DSM 9187 / NBRC 110442 / TA 4)).